A 270-amino-acid polypeptide reads, in one-letter code: Acyl-[acyl-carrier-protein]--UDP-N-acetylglucosamine O-acyltransferase (270 aa).

This sequence belongs to the transferase hexapeptide repeat family. LpxA subfamily. In terms of assembly, homotrimer.

The protein localises to the cytoplasm. The catalysed reaction is a (3R)-hydroxyacyl-[ACP] + UDP-N-acetyl-alpha-D-glucosamine = a UDP-3-O-[(3R)-3-hydroxyacyl]-N-acetyl-alpha-D-glucosamine + holo-[ACP]. It participates in glycolipid biosynthesis; lipid IV(A) biosynthesis; lipid IV(A) from (3R)-3-hydroxytetradecanoyl-[acyl-carrier-protein] and UDP-N-acetyl-alpha-D-glucosamine: step 1/6. In terms of biological role, involved in the biosynthesis of lipid A, a phosphorylated glycolipid that anchors the lipopolysaccharide to the outer membrane of the cell. The polypeptide is Acyl-[acyl-carrier-protein]--UDP-N-acetylglucosamine O-acyltransferase (Sinorhizobium fredii (strain NBRC 101917 / NGR234)).